The sequence spans 513 residues: Pleiotropic regulator 1 (513 aa).

At methionine 1 the chain carries N-acetylmethionine. Phosphoserine occurs at positions 119 and 200. WD repeat units lie at residues 201 to 240, 243 to 282, 285 to 324, 327 to 366, 369 to 409, 410 to 448, and 459 to 498; these read GHLGWVRCIAVEPGNQWFVTGSADRTIKIWDLASGKLKLS, GHISTVRGVIVSTRSPYLFSCGEDKQVKCWDLEYNKVIRH, GHLSAVYGLDLHPTIDVLVTCSRDSTARIWDVRTKASVHT, GHTNAVATVRCQAAEPQIITGSHDTTIRLWDLVAGKTRVT, NHKK…QNLS, GHNAIINTLTVNSDGVLVSGADNGTMHLWDWRTGYNFQR, and DSESGIFACAFDQSESRLLTAEADKTIKVYKEDDTATEET. Residue serine 390 is modified to Phosphoserine.

This sequence belongs to the WD repeat PRL1/PRL2 family. In terms of assembly, identified in the spliceosome C complex. Component of the PRP19-CDC5L splicing complex composed of a core complex comprising a homotetramer of PRPF19, CDC5L, PLRG1 and BCAS2, and at least three less stably associated proteins CTNNBL1, CWC15 and HSPA8. Interacts (via its WD40 repeat domain) directly with CDC5L (via its C-terminal); the interaction is required for mRNA splicing but not for spliceosome assembly. Component of the minor spliceosome, which splices U12-type introns. Within this complex, interacts with CRIPT. Also interacts directly in the complex with BCAS2 and PRPF19. Interacts with USB1.

Its subcellular location is the nucleus. It is found in the nucleus speckle. Functionally, involved in pre-mRNA splicing as component of the spliceosome. Component of the PRP19-CDC5L complex that forms an integral part of the spliceosome and is required for activating pre-mRNA splicing. As a component of the minor spliceosome, involved in the splicing of U12-type introns in pre-mRNAs. The chain is Pleiotropic regulator 1 (PLRG1) from Bos taurus (Bovine).